Reading from the N-terminus, the 203-residue chain is Tic20 family protein Ycf60 (203 aa).

The next 5 membrane-spanning stretches (helical) occupy residues 2-22 (IRLF…RLAL), 51-71 (TVPY…YVLP), 84-104 (IILP…VTFF), 131-151 (ILLF…PIEF), and 153-173 (ISFL…STIT).

This sequence belongs to the Tic20 family.

The protein localises to the plastid. The protein resides in the chloroplast membrane. The polypeptide is Tic20 family protein Ycf60 (ycf60) (Pyropia yezoensis (Susabi-nori)).